We begin with the raw amino-acid sequence, 394 residues long: Subtilisin-like protease 4 (394 aa).

A signal peptide spans 1–17 (CLKTLSVFLAAFAAADA). The propeptide occupies 18–116 (RAVFKTQGHK…VEQDQVVRIS (99 aa)). Residues 36–115 (YIVVMKDGVS…YVEQDQVVRI (80 aa)) enclose the Inhibitor I9 domain. N-linked (GlcNAc...) asparagine glycosylation is present at N100. The region spanning 126 to 394 (SWGLGRVSHR…STTNRLLYNG (269 aa)) is the Peptidase S8 domain. Residues D158 and H189 each act as charge relay system in the active site. Residues N250 and N306 are each glycosylated (N-linked (GlcNAc...) asparagine). The Charge relay system role is filled by S344.

This sequence belongs to the peptidase S8 family.

Its subcellular location is the secreted. Its function is as follows. Secreted subtilisin-like serine protease with keratinolytic activity that contributes to pathogenicity. The polypeptide is Subtilisin-like protease 4 (SUB4) (Trichophyton equinum (Horse ringworm fungus)).